The following is a 378-amino-acid chain: tRNA-specific 2-thiouridylase MnmA (378 aa).

ATP is bound by residues 9–16 (GVSGGVDS) and Met35. The interaction with target base in tRNA stretch occupies residues 94–96 (NPD). The active-site Nucleophile is Cys99. The cysteines at positions 99 and 195 are disulfide-linked. Residue Gly123 coordinates ATP. Residues 145–147 (KDQ) are interaction with tRNA. Cys195 (cysteine persulfide intermediate) is an active-site residue. An interaction with tRNA region spans residues 307 to 308 (RY).

This sequence belongs to the MnmA/TRMU family.

It is found in the cytoplasm. The enzyme catalyses S-sulfanyl-L-cysteinyl-[protein] + uridine(34) in tRNA + AH2 + ATP = 2-thiouridine(34) in tRNA + L-cysteinyl-[protein] + A + AMP + diphosphate + H(+). Functionally, catalyzes the 2-thiolation of uridine at the wobble position (U34) of tRNA, leading to the formation of s(2)U34. The sequence is that of tRNA-specific 2-thiouridylase MnmA from Xanthomonas campestris pv. campestris (strain 8004).